The primary structure comprises 286 residues: Ribosomal RNA small subunit methyltransferase H (286 aa).

Residues 30-32 (GGH), Asp49, Phe88, Asp97, and Gln104 contribute to the S-adenosyl-L-methionine site. A disordered region spans residues 260 to 286 (HPLQPSDEESFNNPASRSAKLRALEMR).

The protein belongs to the methyltransferase superfamily. RsmH family.

Its subcellular location is the cytoplasm. The catalysed reaction is cytidine(1402) in 16S rRNA + S-adenosyl-L-methionine = N(4)-methylcytidine(1402) in 16S rRNA + S-adenosyl-L-homocysteine + H(+). Its function is as follows. Specifically methylates the N4 position of cytidine in position 1402 (C1402) of 16S rRNA. This Solibacter usitatus (strain Ellin6076) protein is Ribosomal RNA small subunit methyltransferase H.